The sequence spans 253 residues: Chitooligosaccharide deacetylase (253 aa).

His-61 and His-126 together coordinate Mg(2+).

It belongs to the YdjC deacetylase family. ChbG subfamily. As to quaternary structure, homodimer. Mg(2+) serves as cofactor.

The protein resides in the cytoplasm. The catalysed reaction is N,N'-diacetylchitobiose + H2O = N-acetyl-beta-D-glucosaminyl-(1-&gt;4)-D-glucosamine + acetate. It catalyses the reaction diacetylchitobiose-6'-phosphate + H2O = N'-monoacetylchitobiose-6'-phosphate + acetate. The protein operates within glycan degradation; chitin degradation. Functionally, involved in the degradation of chitin. ChbG is essential for growth on the acetylated chitooligosaccharides chitobiose and chitotriose but is dispensable for growth on cellobiose and chitosan dimer, the deacetylated form of chitobiose. Deacetylation of chitobiose-6-P and chitotriose-6-P is necessary for both the activation of the chb promoter by the regulatory protein ChbR and the hydrolysis of phosphorylated beta-glucosides by the phospho-beta-glucosidase ChbF. Catalyzes the removal of only one acetyl group from chitobiose-6-P to yield monoacetylchitobiose-6-P, the inducer of ChbR and the substrate of ChbF. The polypeptide is Chitooligosaccharide deacetylase (Yersinia pestis bv. Antiqua (strain Angola)).